The following is a 313-amino-acid chain: Methionyl-tRNA formyltransferase (313 aa).

109 to 112 (SLLP) contributes to the (6S)-5,6,7,8-tetrahydrofolate binding site.

This sequence belongs to the Fmt family.

It catalyses the reaction L-methionyl-tRNA(fMet) + (6R)-10-formyltetrahydrofolate = N-formyl-L-methionyl-tRNA(fMet) + (6S)-5,6,7,8-tetrahydrofolate + H(+). Its function is as follows. Attaches a formyl group to the free amino group of methionyl-tRNA(fMet). The formyl group appears to play a dual role in the initiator identity of N-formylmethionyl-tRNA by promoting its recognition by IF2 and preventing the misappropriation of this tRNA by the elongation apparatus. This chain is Methionyl-tRNA formyltransferase, found in Thermotoga maritima (strain ATCC 43589 / DSM 3109 / JCM 10099 / NBRC 100826 / MSB8).